Here is a 127-residue protein sequence, read N- to C-terminus: Fluoride-specific ion channel FluC (127 aa).

4 helical membrane-spanning segments follow: residues 4–24 (LSVLGFIALGGAFGACSRYLI), 38–58 (YGTLTVNVVGSFIMGLLIAAF), 71–91 (IIGLGFLGALTTFSTFSMDNV), and 104–124 (LNVLLNVVLSISAAWIGFQLL). 2 residues coordinate Na(+): Gly78 and Thr81.

This sequence belongs to the fluoride channel Fluc/FEX (TC 1.A.43) family.

Its subcellular location is the cell inner membrane. It carries out the reaction fluoride(in) = fluoride(out). With respect to regulation, na(+) is not transported, but it plays an essential structural role and its presence is essential for fluoride channel function. In terms of biological role, fluoride-specific ion channel. Important for reducing fluoride concentration in the cell, thus reducing its toxicity. The polypeptide is Fluoride-specific ion channel FluC (Vibrio campbellii (strain ATCC BAA-1116)).